Here is a 333-residue protein sequence, read N- to C-terminus: MKKMVQIKYKEVKTKRVNDYETTFKIEPLERGFGSTIGTALRRTLLSSITSVVPFAIKIKDVDQEFDTISDIVEDVQMIMLNVKNIHLVYDENIFEDNKIYRGVIETKNEKITSSDLKFPENPEIEIVNKDLEIATNNGQKPFVMEVYFHVGRGYISFEDNKKLIEEKVALLNSTIKRGKFLAIDSDFSPVEKVKVKVQEINSSSLNIEEELEIEIKTKGTIDTKNILSQAAQILIAHLQVIGDVKNLDAVDVFEQKKQEKVEPSIHSVDITSLDLSVRSINALKRQGYTKLADILTLTEDDLVAVKNLGKKSVEEIIQKLKEYNVTLNRGEK.

An alpha N-terminal domain (alpha-NTD) region spans residues 1–246 (MKKMVQIKYK…AHLQVIGDVK (246 aa)). The segment at 262–333 (VEPSIHSVDI…YNVTLNRGEK (72 aa)) is alpha C-terminal domain (alpha-CTD).

It belongs to the RNA polymerase alpha chain family. Homodimer. The RNAP catalytic core consists of 2 alpha, 1 beta, 1 beta' and 1 omega subunit. When a sigma factor is associated with the core the holoenzyme is formed, which can initiate transcription.

The enzyme catalyses RNA(n) + a ribonucleoside 5'-triphosphate = RNA(n+1) + diphosphate. DNA-dependent RNA polymerase catalyzes the transcription of DNA into RNA using the four ribonucleoside triphosphates as substrates. This chain is DNA-directed RNA polymerase subunit alpha, found in Mycoplasmopsis pulmonis (strain UAB CTIP) (Mycoplasma pulmonis).